Consider the following 86-residue polypeptide: Small ribosomal subunit protein bS20 (86 aa).

This sequence belongs to the bacterial ribosomal protein bS20 family.

Functionally, binds directly to 16S ribosomal RNA. This Bifidobacterium longum subsp. infantis (strain ATCC 15697 / DSM 20088 / JCM 1222 / NCTC 11817 / S12) protein is Small ribosomal subunit protein bS20.